We begin with the raw amino-acid sequence, 421 residues long: Outer capsid protein P8 (421 aa).

It belongs to the phytoreovirus outer capsid protein P8 family. In terms of assembly, homotrimer. Homomultimer. Interacts with host peroxisomal glycolate oxidase (GOX). This interaction mediates its relocation to virus factories peripheral to host peroxisomes.

Its subcellular location is the virion. The protein localises to the host cytoplasm. In terms of biological role, capsid protein which self-assembles to form the outer icosahedral capsid with a T=13 symmetry, about 70 nm in diameter and consisting of 780 molecules capsid proteins. In Alopecurus aequalis (Barnyard grass), this protein is Outer capsid protein P8.